Here is a 301-residue protein sequence, read N- to C-terminus: Glycine--tRNA ligase alpha subunit (301 aa).

Belongs to the class-II aminoacyl-tRNA synthetase family. In terms of assembly, tetramer of two alpha and two beta subunits.

It is found in the cytoplasm. It carries out the reaction tRNA(Gly) + glycine + ATP = glycyl-tRNA(Gly) + AMP + diphosphate. This is Glycine--tRNA ligase alpha subunit from Shewanella oneidensis (strain ATCC 700550 / JCM 31522 / CIP 106686 / LMG 19005 / NCIMB 14063 / MR-1).